The following is a 532-amino-acid chain: Intercellular adhesion molecule 1 (532 aa).

Residues 1–27 (MAPSGPQPALPILVVLLGALLLGPGNA) form the signal peptide. Topologically, residues 28-480 (QTSVFPPEVI…TVNVLSPRYE (453 aa)) are extracellular. Ig-like C2-type domains lie at 41-103 (GGSV…QSSA) and 128-193 (GKNL…LDLR). Asparagine 47 is a glycosylation site (N-linked (GlcNAc...) asparagine). 2 cysteine pairs are disulfide-bonded: cysteine 48–cysteine 92 and cysteine 52–cysteine 96. N-linked (GlcNAc...) asparagine glycans are attached at residues asparagine 130 and asparagine 145. Cysteine 135 and cysteine 186 are joined by a disulfide. Residues 152–154 (RGE) carry the Cell attachment site; atypical motif. Asparagine 183, asparagine 202, asparagine 267, asparagine 296, and asparagine 316 each carry an N-linked (GlcNAc...) asparagine glycan. Residues 230–297 (DTQGTVVCSL…LLCGVMLGNQ (68 aa)) form the Ig-like C2-type 3 domain. Cysteine 237 and cysteine 290 are joined by a disulfide. Residues 325-378 (GTEVIVECEAHPRAKVMLNGVPAQPPGPRAQFLLKATPEDNGRSFSCSATLEVA) enclose the Ig-like C2-type 4 domain. Cysteine 332 and cysteine 371 are joined by a disulfide. Asparagine 385 and asparagine 406 each carry an N-linked (GlcNAc...) asparagine glycan. Disulfide bonds link cysteine 403-cysteine 419, cysteine 419-cysteine 457, and cysteine 431-cysteine 457. Positions 412–464 (NSQQTPMCQAWGNPLPQLKCLKDGTFPLPIGQSVTVTRDLEGTYLCQARSTRG) constitute an Ig-like C2-type 5 domain. Residues 481 to 503 (VVIIPVVAAAVILGTAGVATYLY) traverse the membrane as a helical segment. Residues 504-532 (NRQRKIRKYRLQQAQNGTPMKPNTQATPP) are Cytoplasmic-facing. The disordered stretch occupies residues 513–532 (RLQQAQNGTPMKPNTQATPP). The span at 515–532 (QQAQNGTPMKPNTQATPP) shows a compositional bias: polar residues. A phosphothreonine mark is found at threonine 521 and threonine 530.

The protein belongs to the immunoglobulin superfamily. ICAM family. Homodimer. Interacts with MUC1 and promotes cell aggregation in epithelial cells. Interacts with ARHGEF26/SGEF. Interacts (on T cell side) with CD81, CD247 and CD9 at immunological synapses between antigen-presenting cells and T cells. Monoubiquitinated, which is promoted by MARCH9 and leads to endocytosis.

The protein localises to the membrane. In terms of biological role, ICAM proteins are ligands for the leukocyte adhesion protein LFA-1 (integrin alpha-L/beta-2). During leukocyte trans-endothelial migration, ICAM1 engagement promotes the assembly of endothelial apical cups through ARHGEF26/SGEF and RHOG activation. The sequence is that of Intercellular adhesion molecule 1 (ICAM1) from Macaca mulatta (Rhesus macaque).